The sequence spans 109 residues: Large ribosomal subunit protein uL22 (109 aa).

Belongs to the universal ribosomal protein uL22 family. In terms of assembly, part of the 50S ribosomal subunit.

Its function is as follows. This protein binds specifically to 23S rRNA; its binding is stimulated by other ribosomal proteins, e.g. L4, L17, and L20. It is important during the early stages of 50S assembly. It makes multiple contacts with different domains of the 23S rRNA in the assembled 50S subunit and ribosome. Functionally, the globular domain of the protein is located near the polypeptide exit tunnel on the outside of the subunit, while an extended beta-hairpin is found that lines the wall of the exit tunnel in the center of the 70S ribosome. The polypeptide is Large ribosomal subunit protein uL22 (Cupriavidus metallidurans (strain ATCC 43123 / DSM 2839 / NBRC 102507 / CH34) (Ralstonia metallidurans)).